Here is a 377-residue protein sequence, read N- to C-terminus: Carbamoyl phosphate synthase small chain (377 aa).

The tract at residues 1–186 (MSTPALLVLA…LGKGFVTPDE (186 aa)) is CPSase. Residues S47, G238, and G240 each coordinate L-glutamine. The Glutamine amidotransferase type-1 domain maps to 190–377 (HVVAYDFGVK…IGNMKAAKRA (188 aa)). C266 acts as the Nucleophile in catalysis. The L-glutamine site is built by L267, Q270, N308, G310, and F311. Active-site residues include H350 and E352.

It belongs to the CarA family. Composed of two chains; the small (or glutamine) chain promotes the hydrolysis of glutamine to ammonia, which is used by the large (or ammonia) chain to synthesize carbamoyl phosphate. Tetramer of heterodimers (alpha,beta)4.

The enzyme catalyses hydrogencarbonate + L-glutamine + 2 ATP + H2O = carbamoyl phosphate + L-glutamate + 2 ADP + phosphate + 2 H(+). It carries out the reaction L-glutamine + H2O = L-glutamate + NH4(+). The protein operates within amino-acid biosynthesis; L-arginine biosynthesis; carbamoyl phosphate from bicarbonate: step 1/1. Its pathway is pyrimidine metabolism; UMP biosynthesis via de novo pathway; (S)-dihydroorotate from bicarbonate: step 1/3. In terms of biological role, small subunit of the glutamine-dependent carbamoyl phosphate synthetase (CPSase). CPSase catalyzes the formation of carbamoyl phosphate from the ammonia moiety of glutamine, carbonate, and phosphate donated by ATP, constituting the first step of 2 biosynthetic pathways, one leading to arginine and/or urea and the other to pyrimidine nucleotides. The small subunit (glutamine amidotransferase) binds and cleaves glutamine to supply the large subunit with the substrate ammonia. This chain is Carbamoyl phosphate synthase small chain, found in Neisseria meningitidis serogroup A / serotype 4A (strain DSM 15465 / Z2491).